We begin with the raw amino-acid sequence, 428 residues long: Serine--tRNA ligase (428 aa).

Thr235–Glu237 contributes to the L-serine binding site. Arg266–Glu268 provides a ligand contact to ATP. Glu289 contributes to the L-serine binding site. Glu353–Ser356 lines the ATP pocket. Ser389 serves as a coordination point for L-serine.

It belongs to the class-II aminoacyl-tRNA synthetase family. Type-1 seryl-tRNA synthetase subfamily. In terms of assembly, homodimer. The tRNA molecule binds across the dimer.

Its subcellular location is the cytoplasm. The catalysed reaction is tRNA(Ser) + L-serine + ATP = L-seryl-tRNA(Ser) + AMP + diphosphate + H(+). It carries out the reaction tRNA(Sec) + L-serine + ATP = L-seryl-tRNA(Sec) + AMP + diphosphate + H(+). The protein operates within aminoacyl-tRNA biosynthesis; selenocysteinyl-tRNA(Sec) biosynthesis; L-seryl-tRNA(Sec) from L-serine and tRNA(Sec): step 1/1. In terms of biological role, catalyzes the attachment of serine to tRNA(Ser). Is also able to aminoacylate tRNA(Sec) with serine, to form the misacylated tRNA L-seryl-tRNA(Sec), which will be further converted into selenocysteinyl-tRNA(Sec). The sequence is that of Serine--tRNA ligase from Shewanella sp. (strain ANA-3).